Consider the following 350-residue polypeptide: Mitochondrial glycine transporter (350 aa).

Solcar repeat units follow at residues 23 to 107 (SKPK…LRQC), 134 to 218 (LSHT…SKKN), and 250 to 334 (SSIS…LILK). 6 consecutive transmembrane segments (helical) span residues 29-54 (FIAGLASGLSSAILLQPADLLKTRIQ), 82-108 (GTLPSALRTGFGSALYFSSLNALRQCI), 140-165 (LLTGAMARTAAGFIMMPVTVIKVRYE), 193-216 (GFGATAIRDAPYAGLYVVFYEQSK), 254-280 (VNFVSGALAAGLATSITNPFDVVKTRL), and 309-327 (GLGLRMGRKAISSALAWTV).

Belongs to the mitochondrial carrier (TC 2.A.29) family. SLC25A38 subfamily.

The protein resides in the mitochondrion inner membrane. The enzyme catalyses glycine(in) = glycine(out). Functionally, mitochondrial glycine transporter that imports glycine into the mitochondrial matrix. Plays an important role in providing glycine for the first enzymatic step in heme biosynthesis, the condensation of glycine with succinyl-CoA to produce 5-aminolevulinate (ALA) in the mitochondrial matrix. In Ajellomyces capsulatus (strain NAm1 / WU24) (Darling's disease fungus), this protein is Mitochondrial glycine transporter.